A 145-amino-acid polypeptide reads, in one-letter code: uncharacterized protein (145 aa).

Its subcellular location is the mitochondrion. This is an uncharacterized protein from Arabidopsis thaliana (Mouse-ear cress).